The chain runs to 190 residues: Segregation and condensation protein B (190 aa).

Belongs to the ScpB family. As to quaternary structure, homodimer. Homodimerization may be required to stabilize the binding of ScpA to the Smc head domains. Component of a cohesin-like complex composed of ScpA, ScpB and the Smc homodimer, in which ScpA and ScpB bind to the head domain of Smc. The presence of the three proteins is required for the association of the complex with DNA.

Its subcellular location is the cytoplasm. Functionally, participates in chromosomal partition during cell division. May act via the formation of a condensin-like complex containing Smc and ScpA that pull DNA away from mid-cell into both cell halves. This chain is Segregation and condensation protein B, found in Bacillus thuringiensis subsp. konkukian (strain 97-27).